The chain runs to 637 residues: 1-deoxy-D-xylulose-5-phosphate synthase (637 aa).

Residues His-76 and 117–119 (GHS) contribute to the thiamine diphosphate site. Asp-148 contacts Mg(2+). Thiamine diphosphate is bound by residues 149 to 150 (GA), Asn-177, Tyr-294, and Glu-381. Residue Asn-177 participates in Mg(2+) binding.

The protein belongs to the transketolase family. DXPS subfamily. As to quaternary structure, homodimer. Mg(2+) is required as a cofactor. Thiamine diphosphate serves as cofactor.

The enzyme catalyses D-glyceraldehyde 3-phosphate + pyruvate + H(+) = 1-deoxy-D-xylulose 5-phosphate + CO2. The protein operates within metabolic intermediate biosynthesis; 1-deoxy-D-xylulose 5-phosphate biosynthesis; 1-deoxy-D-xylulose 5-phosphate from D-glyceraldehyde 3-phosphate and pyruvate: step 1/1. Its function is as follows. Catalyzes the acyloin condensation reaction between C atoms 2 and 3 of pyruvate and glyceraldehyde 3-phosphate to yield 1-deoxy-D-xylulose-5-phosphate (DXP). The protein is 1-deoxy-D-xylulose-5-phosphate synthase of Neisseria meningitidis serogroup C / serotype 2a (strain ATCC 700532 / DSM 15464 / FAM18).